A 300-amino-acid polypeptide reads, in one-letter code: Secreted mono- and diacylglycerol lipase LIP4 (300 aa).

An N-terminal signal peptide occupies residues Met-1–Cys-16. Cys-54 and Cys-293 are oxidised to a cystine. Ser-167 acts as the Nucleophile in catalysis. Asp-224 is an active-site residue.

Belongs to the AB hydrolase superfamily. Lipase family. Class 3 subfamily.

Its subcellular location is the secreted. It carries out the reaction a monoacylglycerol + H2O = glycerol + a fatty acid + H(+). It catalyses the reaction a diacylglycerol + H2O = a monoacylglycerol + a fatty acid + H(+). Its function is as follows. Secreted lipase involved in Dandruff and seborrheic dermatitis (D/SD) probably via lipase-mediated breakdown of sebaceous lipids and release of irritating free fatty acids. Shows activity against monoglyceride and diglyceride substrates. Due to an absence of fatty acid synthase genes in Malassezia species, secretory lipases are essential for the yeast to generate free fatty acids from degradation of sebum and assimilate them as lipid sources for growth. Plays an essential role at the pathogen-host interface during disease progression. This chain is Secreted mono- and diacylglycerol lipase LIP4, found in Malassezia restricta (Seborrheic dermatitis infection agent).